The chain runs to 1841 residues: Sucrase-isomaltase, intestinal (1841 aa).

Residues 1 to 12 lie on the Cytoplasmic side of the membrane; the sequence is MAKKKFSALEIS. S7 carries the post-translational modification Phosphoserine; by PKA. A helical; Signal-anchor for type II membrane protein membrane pass occupies residues 13-32; it reads LIVLFIIVTAIAIALVTVLA. Over 33 to 1841 the chain is Lumenal; sequence TKVPAVEEIK…LDEPIQITWS (1809 aa). The tract at residues 42–81 is disordered; sequence KSPTPTSNSTPTSTPTSTSTPTSTSTPSPGKCPPEQGEPI. Positions 43-70 are enriched in low complexity; sequence SPTPTSNSTPTSTPTSTSTPTSTSTPSP. The P-type 1 domain maps to 71 to 120; sequence GKCPPEQGEPINERINCIPEQHPTKAICEERGCCWRPWNNTVIPWCFFAD. 3 disulfide bridges follow: C73/C104, C87/C103, and C98/C116. N109 is a glycosylation site (N-linked (GlcNAc...) asparagine). An isomaltase region spans residues 120-1013; the sequence is DNHGYNAESI…ELQLNPPNAR (894 aa). Positions 274 and 398 each coordinate substrate. Sulfotyrosine is present on residues Y401 and Y410. Residue N464 is glycosylated (N-linked (GlcNAc...) asparagine). D514 functions as the Nucleophile; for isomaltase activity in the catalytic mechanism. Residue R599 participates in substrate binding. D615 acts as the For isomaltase activity in catalysis. Residues C646 and C657 are joined by a disulfide bond. H673 is a substrate binding site. N-linked (GlcNAc...) asparagine glycans are attached at residues N758, N765, N867, and N910. The P-type 2 domain maps to 936–984; the sequence is RWCRTFSDNEKFTCYPDVGTATEGTCTQRGCLWQPVSGLSNVPPYYFPP. Residues 1014-1841 form a sucrase region; the sequence is IKLPSNPIST…LDEPIQITWS (828 aa). N-linked (GlcNAc...) asparagine glycans are attached at residues N1240, N1308, N1345, N1359, and N1373. Y1387 carries the post-translational modification Sulfotyrosine. D1399 (nucleophile; for sucrase activity) is an active-site residue. E1402 serves as the catalytic For sucrase activity. N-linked (GlcNAc...) asparagine glycosylation is present at N1485. Residue D1512 is the Proton donor; for sucrase activity of the active site. N-linked (GlcNAc...) asparagine glycans are attached at residues N1513, N1575, N1762, and N1829.

This sequence belongs to the glycosyl hydrolase 31 family. The resulting sucrase and isomaltase subunits stay associated with one another in a complex by non-covalent linkages. Post-translationally, the precursor is proteolytically cleaved when exposed to pancreatic proteases in the intestinal lumen. In terms of processing, sulfated.

Its subcellular location is the apical cell membrane. It catalyses the reaction Hydrolysis of sucrose and maltose by an alpha-D-glucosidase-type action.. It carries out the reaction Hydrolysis of (1-&gt;6)-alpha-D-glucosidic linkages in some oligosaccharides produced from starch and glycogen by alpha-amylase, and in isomaltose.. In terms of biological role, plays an important role in the final stage of carbohydrate digestion. Isomaltase activity is specific for both alpha-1,4- and alpha-1,6-oligosaccharides. The chain is Sucrase-isomaltase, intestinal (Si) from Rattus norvegicus (Rat).